The primary structure comprises 484 residues: Cobyric acid synthase (484 aa).

In terms of domain architecture, GATase cobBQ-type spans 251 to 438 (ALKIAVPVLS…LHGLFGNDEY (188 aa)). Cysteine 333 functions as the Nucleophile in the catalytic mechanism. Residue histidine 430 is part of the active site.

This sequence belongs to the CobB/CobQ family. CobQ subfamily.

The protein operates within cofactor biosynthesis; adenosylcobalamin biosynthesis. Catalyzes amidations at positions B, D, E, and G on adenosylcobyrinic A,C-diamide. NH(2) groups are provided by glutamine, and one molecule of ATP is hydrogenolyzed for each amidation. The sequence is that of Cobyric acid synthase from Allorhizobium ampelinum (strain ATCC BAA-846 / DSM 112012 / S4) (Agrobacterium vitis (strain S4)).